The sequence spans 186 residues: UPF0398 protein LBUL_0921 (186 aa).

It belongs to the UPF0398 family.

In Lactobacillus delbrueckii subsp. bulgaricus (strain ATCC BAA-365 / Lb-18), this protein is UPF0398 protein LBUL_0921.